The primary structure comprises 110 residues: Large ribosomal subunit protein uL22 (110 aa).

It belongs to the universal ribosomal protein uL22 family. As to quaternary structure, part of the 50S ribosomal subunit.

Functionally, this protein binds specifically to 23S rRNA; its binding is stimulated by other ribosomal proteins, e.g. L4, L17, and L20. It is important during the early stages of 50S assembly. It makes multiple contacts with different domains of the 23S rRNA in the assembled 50S subunit and ribosome. In terms of biological role, the globular domain of the protein is located near the polypeptide exit tunnel on the outside of the subunit, while an extended beta-hairpin is found that lines the wall of the exit tunnel in the center of the 70S ribosome. The chain is Large ribosomal subunit protein uL22 from Mycoplasmopsis pulmonis (strain UAB CTIP) (Mycoplasma pulmonis).